The primary structure comprises 502 residues: Protein MGF 505-5R (502 aa).

Belongs to the asfivirus MGF 505 family.

Its function is as follows. Plays a role in virus cell tropism, and may be required for efficient virus replication in macrophages. This Ornithodoros (relapsing fever ticks) protein is Protein MGF 505-5R.